Reading from the N-terminus, the 208-residue chain is Outer-membrane lipoprotein carrier protein (208 aa).

The signal sequence occupies residues methionine 1 to alanine 21. A disordered region spans residues lysine 188 to glutamate 208. Acidic residues predominate over residues valine 199–glutamate 208.

The protein belongs to the LolA family. As to quaternary structure, monomer.

It is found in the periplasm. Participates in the translocation of lipoproteins from the inner membrane to the outer membrane. Only forms a complex with a lipoprotein if the residue after the N-terminal Cys is not an aspartate (The Asp acts as a targeting signal to indicate that the lipoprotein should stay in the inner membrane). In Pseudoalteromonas translucida (strain TAC 125), this protein is Outer-membrane lipoprotein carrier protein.